We begin with the raw amino-acid sequence, 237 residues long: Ribose-5-phosphate isomerase A (237 aa).

Substrate is bound by residues 33-36 (TGST), 90-93 (DGAD), and 103-106 (KGGG). Glutamate 112 serves as the catalytic Proton acceptor. Lysine 130 serves as a coordination point for substrate.

Belongs to the ribose 5-phosphate isomerase family. As to quaternary structure, homodimer.

It catalyses the reaction aldehydo-D-ribose 5-phosphate = D-ribulose 5-phosphate. It functions in the pathway carbohydrate degradation; pentose phosphate pathway; D-ribose 5-phosphate from D-ribulose 5-phosphate (non-oxidative stage): step 1/1. Catalyzes the reversible conversion of ribose-5-phosphate to ribulose 5-phosphate. In Gloeothece citriformis (strain PCC 7424) (Cyanothece sp. (strain PCC 7424)), this protein is Ribose-5-phosphate isomerase A.